A 375-amino-acid chain; its full sequence is Carbamoyl phosphate synthase small chain (375 aa).

Positions 1 to 180 (MSKALLVLED…DAYVVEPKGK (180 aa)) are CPSase. L-glutamine-binding residues include S46, G232, and G234. In terms of domain architecture, Glutamine amidotransferase type-1 spans 184-375 (TVAALDLGIK…SFVELMAAQR (192 aa)). The active-site Nucleophile is the C260. 5 residues coordinate L-glutamine: F261, Q264, N302, G304, and F305. Residues H350 and E352 contribute to the active site.

This sequence belongs to the CarA family. As to quaternary structure, composed of two chains; the small (or glutamine) chain promotes the hydrolysis of glutamine to ammonia, which is used by the large (or ammonia) chain to synthesize carbamoyl phosphate. Tetramer of heterodimers (alpha,beta)4.

The enzyme catalyses hydrogencarbonate + L-glutamine + 2 ATP + H2O = carbamoyl phosphate + L-glutamate + 2 ADP + phosphate + 2 H(+). The catalysed reaction is L-glutamine + H2O = L-glutamate + NH4(+). It functions in the pathway amino-acid biosynthesis; L-arginine biosynthesis; carbamoyl phosphate from bicarbonate: step 1/1. Its pathway is pyrimidine metabolism; UMP biosynthesis via de novo pathway; (S)-dihydroorotate from bicarbonate: step 1/3. Its function is as follows. Small subunit of the glutamine-dependent carbamoyl phosphate synthetase (CPSase). CPSase catalyzes the formation of carbamoyl phosphate from the ammonia moiety of glutamine, carbonate, and phosphate donated by ATP, constituting the first step of 2 biosynthetic pathways, one leading to arginine and/or urea and the other to pyrimidine nucleotides. The small subunit (glutamine amidotransferase) binds and cleaves glutamine to supply the large subunit with the substrate ammonia. This Mycobacterium leprae (strain TN) protein is Carbamoyl phosphate synthase small chain.